Here is a 138-residue protein sequence, read N- to C-terminus: Large ribosomal subunit protein uL16 (138 aa).

The span at 1-13 (MLQPKRRKYRKEQ) shows a compositional bias: basic residues. The segment at 1 to 22 (MLQPKRRKYRKEQKGRNTGVAT) is disordered.

It belongs to the universal ribosomal protein uL16 family. In terms of assembly, part of the 50S ribosomal subunit.

Its function is as follows. Binds 23S rRNA and is also seen to make contacts with the A and possibly P site tRNAs. The chain is Large ribosomal subunit protein uL16 from Paraburkholderia phymatum (strain DSM 17167 / CIP 108236 / LMG 21445 / STM815) (Burkholderia phymatum).